The following is a 607-amino-acid chain: Sulfite reductase [NADPH] flavoprotein alpha-component (607 aa).

The region spanning 66–204 (VTILYGSQTG…AAGQWHADVL (139 aa)) is the Flavodoxin-like domain. FMN contacts are provided by residues 72–77 (SQTGNG), 119–122 (STHG), and 155–164 (LGDSSYEFFC). Positions 239-456 (QNPYRAEVLV…VEPNKHFRLP (218 aa)) constitute an FAD-binding FR-type domain. FAD is bound by residues Thr327, Leu361, 395 to 398 (RLYS), 413 to 415 (TVA), and 428 to 431 (GGAS). NADP(+) is bound by residues 527–528 (SR), 533–537 (KIYVQ), and Asp569. Residue Tyr607 coordinates FAD.

This sequence belongs to the NADPH-dependent sulphite reductase flavoprotein subunit CysJ family. The protein in the N-terminal section; belongs to the flavodoxin family. It in the C-terminal section; belongs to the flavoprotein pyridine nucleotide cytochrome reductase family. Alpha(8)-beta(8). The alpha component is a flavoprotein, the beta component is a hemoprotein. FAD is required as a cofactor. It depends on FMN as a cofactor.

The catalysed reaction is hydrogen sulfide + 3 NADP(+) + 3 H2O = sulfite + 3 NADPH + 4 H(+). It participates in sulfur metabolism; hydrogen sulfide biosynthesis; hydrogen sulfide from sulfite (NADPH route): step 1/1. Its function is as follows. Component of the sulfite reductase complex that catalyzes the 6-electron reduction of sulfite to sulfide. This is one of several activities required for the biosynthesis of L-cysteine from sulfate. The flavoprotein component catalyzes the electron flow from NADPH -&gt; FAD -&gt; FMN to the hemoprotein component. This Shewanella oneidensis (strain ATCC 700550 / JCM 31522 / CIP 106686 / LMG 19005 / NCIMB 14063 / MR-1) protein is Sulfite reductase [NADPH] flavoprotein alpha-component.